The sequence spans 199 residues: NADH-quinone oxidoreductase subunit C (199 aa).

It belongs to the complex I 30 kDa subunit family. NDH-1 is composed of 14 different subunits. Subunits NuoB, C, D, E, F, and G constitute the peripheral sector of the complex.

The protein localises to the cell membrane. It catalyses the reaction a quinone + NADH + 5 H(+)(in) = a quinol + NAD(+) + 4 H(+)(out). Functionally, NDH-1 shuttles electrons from NADH, via FMN and iron-sulfur (Fe-S) centers, to quinones in the respiratory chain. The immediate electron acceptor for the enzyme in this species is believed to be ubiquinone. Couples the redox reaction to proton translocation (for every two electrons transferred, four hydrogen ions are translocated across the cytoplasmic membrane), and thus conserves the redox energy in a proton gradient. The sequence is that of NADH-quinone oxidoreductase subunit C from Polynucleobacter asymbioticus (strain DSM 18221 / CIP 109841 / QLW-P1DMWA-1) (Polynucleobacter necessarius subsp. asymbioticus).